The following is a 62-amino-acid chain: MTSTQNLKDKFEEEIRQQKEGKGKKEKVWTPHSDSSYNKQTAVKFSGVQGGPPPKKSLSQLP.

A disordered region spans residues 1–62 (MTSTQNLKDK…PPKKSLSQLP (62 aa)). Residues 7-29 (LKDKFEEEIRQQKEGKGKKEKVW) show a composition bias toward basic and acidic residues. Over residues 32–43 (HSDSSYNKQTAV) the composition is skewed to polar residues.

This is an uncharacterized protein from Dictyostelium discoideum (Social amoeba).